A 288-amino-acid chain; its full sequence is Probable endonuclease 4 (288 aa).

Residues histidine 75, histidine 115, glutamate 153, aspartate 187, histidine 190, histidine 224, aspartate 237, histidine 239, and glutamate 269 each contribute to the Zn(2+) site.

It belongs to the AP endonuclease 2 family. Requires Zn(2+) as cofactor.

It carries out the reaction Endonucleolytic cleavage to 5'-phosphooligonucleotide end-products.. In terms of biological role, endonuclease IV plays a role in DNA repair. It cleaves phosphodiester bonds at apurinic or apyrimidinic (AP) sites, generating a 3'-hydroxyl group and a 5'-terminal sugar phosphate. This chain is Probable endonuclease 4, found in Chlamydia trachomatis serovar A (strain ATCC VR-571B / DSM 19440 / HAR-13).